The primary structure comprises 73 residues: Large ribosomal subunit protein bL31 (73 aa).

Zn(2+) contacts are provided by Cys16, Cys18, Cys37, and Cys40.

This sequence belongs to the bacterial ribosomal protein bL31 family. Type A subfamily. As to quaternary structure, part of the 50S ribosomal subunit. Zn(2+) is required as a cofactor.

Binds the 23S rRNA. The protein is Large ribosomal subunit protein bL31 of Pseudomonas fluorescens (strain ATCC BAA-477 / NRRL B-23932 / Pf-5).